Here is a 1094-residue protein sequence, read N- to C-terminus: Carbamoyl phosphate synthase large chain (1094 aa).

The interval 1-402 (MPRRSDLHRI…AFQKALRALE (402 aa)) is carboxyphosphate synthetic domain. Arg-129, Arg-169, Gly-175, Gly-176, Arg-208, Leu-210, Glu-215, Gly-241, Val-242, His-243, Gln-285, and Glu-299 together coordinate ATP. The ATP-grasp 1 domain occupies 133–328 (GEAMEKIGLR…IARIGAKLAV (196 aa)). Residues Gln-285, Glu-299, and Asn-301 each contribute to the Mg(2+) site. Mn(2+)-binding residues include Gln-285, Glu-299, and Asn-301. Positions 403–552 (TGRSGWTIAE…YLYGNYDEES (150 aa)) are oligomerization domain. The interval 553–936 (EAATEGRKKV…AFMKSQLAAD (384 aa)) is carbamoyl phosphate synthetic domain. The ATP-grasp 2 domain occupies 679–870 (EAIARELGIE…LPSVAARLML (192 aa)). Residues Arg-715, Arg-754, Leu-756, Glu-761, Gly-786, Ile-787, His-788, Ser-789, Gln-829, and Glu-841 each contribute to the ATP site. 3 residues coordinate Mg(2+): Gln-829, Glu-841, and Asn-843. Gln-829, Glu-841, and Asn-843 together coordinate Mn(2+). One can recognise an MGS-like domain in the interval 937-1077 (NALPREGTVF…QEWHEILRAP (141 aa)). Residues 937–1094 (NALPREGTVF…AGSTQPAGVA (158 aa)) are allosteric domain.

This sequence belongs to the CarB family. As to quaternary structure, composed of two chains; the small (or glutamine) chain promotes the hydrolysis of glutamine to ammonia, which is used by the large (or ammonia) chain to synthesize carbamoyl phosphate. Tetramer of heterodimers (alpha,beta)4. Mg(2+) serves as cofactor. The cofactor is Mn(2+).

The enzyme catalyses hydrogencarbonate + L-glutamine + 2 ATP + H2O = carbamoyl phosphate + L-glutamate + 2 ADP + phosphate + 2 H(+). The catalysed reaction is hydrogencarbonate + NH4(+) + 2 ATP = carbamoyl phosphate + 2 ADP + phosphate + 2 H(+). Its pathway is amino-acid biosynthesis; L-arginine biosynthesis; carbamoyl phosphate from bicarbonate: step 1/1. The protein operates within pyrimidine metabolism; UMP biosynthesis via de novo pathway; (S)-dihydroorotate from bicarbonate: step 1/3. In terms of biological role, large subunit of the glutamine-dependent carbamoyl phosphate synthetase (CPSase). CPSase catalyzes the formation of carbamoyl phosphate from the ammonia moiety of glutamine, carbonate, and phosphate donated by ATP, constituting the first step of 2 biosynthetic pathways, one leading to arginine and/or urea and the other to pyrimidine nucleotides. The large subunit (synthetase) binds the substrates ammonia (free or transferred from glutamine from the small subunit), hydrogencarbonate and ATP and carries out an ATP-coupled ligase reaction, activating hydrogencarbonate by forming carboxy phosphate which reacts with ammonia to form carbamoyl phosphate. This is Carbamoyl phosphate synthase large chain from Gemmatimonas aurantiaca (strain DSM 14586 / JCM 11422 / NBRC 100505 / T-27).